The following is a 258-amino-acid chain: Phosphate import ATP-binding protein PstB (258 aa).

An ABC transporter domain is found at 5–247 (IDVSGLTAYY…SQIFSNPKEK (243 aa)). 37-44 (GPSGCGKS) contacts ATP.

This sequence belongs to the ABC transporter superfamily. Phosphate importer (TC 3.A.1.7) family. The complex is composed of two ATP-binding proteins (PstB), two transmembrane proteins (PstC and PstA) and a solute-binding protein (PstS).

The protein resides in the cell membrane. It catalyses the reaction phosphate(out) + ATP + H2O = ADP + 2 phosphate(in) + H(+). In terms of biological role, part of the ABC transporter complex PstSACB involved in phosphate import. Responsible for energy coupling to the transport system. This Frankia casuarinae (strain DSM 45818 / CECT 9043 / HFP020203 / CcI3) protein is Phosphate import ATP-binding protein PstB.